Consider the following 120-residue polypeptide: HTH-type transcriptional regulator NmtR (120 aa).

The HTH arsR-type domain occupies 15 to 109; sequence LDSQAAAQVA…EAIYHSEHLH (95 aa). The segment at residues 49-72 is a DNA-binding region (H-T-H motif); sequence VTDLAEAIGMEQSAVSHQLRVLRN. The Ni(2+) site is built by Asp-91, His-93, His-104, and His-107.

In terms of assembly, homodimer.

With respect to regulation, binding to DNA is inhibited by nickel and, to some extent, cobalt ions. Functionally, represses transcription of ctpJ/nmtA, by binding to its promoter region. This Mycobacterium tuberculosis (strain ATCC 25618 / H37Rv) protein is HTH-type transcriptional regulator NmtR (nmtR).